The following is a 265-amino-acid chain: 4-hydroxy-tetrahydrodipicolinate reductase (265 aa).

Residues 7 to 12, D33, 96 to 98, and 120 to 123 contribute to the NAD(+) site; these read GASGRM, GTT, and AANM. The active-site Proton donor/acceptor is the H153. (S)-2,3,4,5-tetrahydrodipicolinate is bound at residue H154. The active-site Proton donor is K157. 163–164 is a (S)-2,3,4,5-tetrahydrodipicolinate binding site; it reads GT.

This sequence belongs to the DapB family.

Its subcellular location is the cytoplasm. The catalysed reaction is (S)-2,3,4,5-tetrahydrodipicolinate + NAD(+) + H2O = (2S,4S)-4-hydroxy-2,3,4,5-tetrahydrodipicolinate + NADH + H(+). It carries out the reaction (S)-2,3,4,5-tetrahydrodipicolinate + NADP(+) + H2O = (2S,4S)-4-hydroxy-2,3,4,5-tetrahydrodipicolinate + NADPH + H(+). It functions in the pathway amino-acid biosynthesis; L-lysine biosynthesis via DAP pathway; (S)-tetrahydrodipicolinate from L-aspartate: step 4/4. In terms of biological role, catalyzes the conversion of 4-hydroxy-tetrahydrodipicolinate (HTPA) to tetrahydrodipicolinate. The protein is 4-hydroxy-tetrahydrodipicolinate reductase of Cupriavidus metallidurans (strain ATCC 43123 / DSM 2839 / NBRC 102507 / CH34) (Ralstonia metallidurans).